Here is a 283-residue protein sequence, read N- to C-terminus: Bifunctional protein FolD (283 aa).

NADP(+) contacts are provided by residues 163 to 165, Ser-188, and Ile-229; that span reads GRS.

The protein belongs to the tetrahydrofolate dehydrogenase/cyclohydrolase family. Homodimer.

The enzyme catalyses (6R)-5,10-methylene-5,6,7,8-tetrahydrofolate + NADP(+) = (6R)-5,10-methenyltetrahydrofolate + NADPH. It catalyses the reaction (6R)-5,10-methenyltetrahydrofolate + H2O = (6R)-10-formyltetrahydrofolate + H(+). Its pathway is one-carbon metabolism; tetrahydrofolate interconversion. In terms of biological role, catalyzes the oxidation of 5,10-methylenetetrahydrofolate to 5,10-methenyltetrahydrofolate and then the hydrolysis of 5,10-methenyltetrahydrofolate to 10-formyltetrahydrofolate. This chain is Bifunctional protein FolD, found in Latilactobacillus sakei subsp. sakei (strain 23K) (Lactobacillus sakei subsp. sakei).